The following is a 489-amino-acid chain: Beta-glucosidase 14 (489 aa).

Residues 1–21 form the signal peptide; sequence MTSKYFSVLVFIILASNEVVA. Gln49 is an a beta-D-glucoside binding site. The N-linked (GlcNAc...) asparagine glycan is linked to Asn80. Residues His153 and 198–199 each bind a beta-D-glucoside; that span reads NE. Glu199 functions as the Proton donor in the catalytic mechanism. Cys218 and Cys226 are oxidised to a cystine. An N-linked (GlcNAc...) asparagine glycan is attached at Asn225. An a beta-D-glucoside-binding site is contributed by Tyr343. N-linked (GlcNAc...) asparagine glycosylation occurs at Asn357. A beta-D-glucoside contacts are provided by residues Glu396, Trp441, 448–449, and Phe457; that span reads EW. Glu396 functions as the Nucleophile in the catalytic mechanism.

It belongs to the glycosyl hydrolase 1 family.

It carries out the reaction Hydrolysis of terminal, non-reducing beta-D-glucosyl residues with release of beta-D-glucose.. In Arabidopsis thaliana (Mouse-ear cress), this protein is Beta-glucosidase 14.